A 407-amino-acid chain; its full sequence is Uronyl 2-sulfotransferase (407 aa).

The segment at 1-20 is disordered; it reads MKKKQQQHPGGGTDPWPHGA. At 1–49 the chain is on the cytoplasmic side; that stretch reads MKKKQQQHPGGGTDPWPHGAPVGGAPPCLGSCKRRIPLLPFLRFSLRDY. The helical; Signal-anchor for type II membrane protein transmembrane segment at 50-70 threads the bilayer; the sequence is GFCMATLLVFCLGSLFYQLSG. The Lumenal segment spans residues 71-407; sequence GPPRFLLDLR…EKWLEDIYKR (337 aa). N-linked (GlcNAc...) asparagine glycosylation is found at Asn-85, Asn-141, and Asn-156. The active site involves His-169. N-linked (GlcNAc...) asparagine glycosylation is found at Asn-174 and Asn-320. Over residues 386–400 the composition is skewed to acidic residues; the sequence is TEEPIDDEEQDDEKW. The segment at 386 to 407 is disordered; that stretch reads TEEPIDDEEQDDEKWLEDIYKR.

This sequence belongs to the sulfotransferase 3 family.

It is found in the golgi apparatus membrane. Functionally, sulfotransferase that catalyzes the transfer of sulfate to the position 2 of uronyl residues in glycosaminoglycan chains. Has mainly activity toward iduronyl residues in dermatan sulfate, and weaker activity toward glucuronyl residues of chondroitin sulfate. Has no activity toward desulfated N-resulfated heparin. This is Uronyl 2-sulfotransferase from Mus musculus (Mouse).